A 231-amino-acid chain; its full sequence is MVLIKRHFLQKAAIKVMVDEYLAKQFYNAEYAGVEIVKTPIGTRVIIYAGRPPLIIGKGGKTIKQLAQVLEKFFGLENPQITVTAAENPELNARVMAFRLAIALEKGYHFRRAAFITIRRIMSSGAVGAEVIVSGKLTSERAKYEKLKEGTVYKSGQQLEKIIDRAIGIAMLKPGVYGVEVVITKPTRSIDKIELKEKVEKTEQGGMVTVTNVSFIEENKSSGGVSNASGS.

One can recognise a KH type-2 domain in the interval 18 to 97; sequence VDEYLAKQFY…NPELNARVMA (80 aa).

Belongs to the universal ribosomal protein uS3 family. In terms of assembly, part of the 30S ribosomal subunit.

Its function is as follows. Binds the lower part of the 30S subunit head. The polypeptide is Small ribosomal subunit protein uS3 (Sulfolobus acidocaldarius (strain ATCC 33909 / DSM 639 / JCM 8929 / NBRC 15157 / NCIMB 11770)).